Here is a 235-residue protein sequence, read N- to C-terminus: Protein Thf1 (235 aa).

Residues 179–228 adopt a coiled-coil conformation; sequence LNLSSDKLQKDLDLYRSNVDKMGQLLAVIEDALEAERKKREKAKQEVATT.

The protein belongs to the THF1 family.

Its function is as follows. May be involved in photosynthetic membrane biogenesis. In Rippkaea orientalis (strain PCC 8801 / RF-1) (Cyanothece sp. (strain PCC 8801)), this protein is Protein Thf1.